The primary structure comprises 234 residues: tRNA1(Val) (adenine(37)-N6)-methyltransferase (234 aa).

It belongs to the methyltransferase superfamily. tRNA (adenine-N(6)-)-methyltransferase family.

It localises to the cytoplasm. The enzyme catalyses adenosine(37) in tRNA1(Val) + S-adenosyl-L-methionine = N(6)-methyladenosine(37) in tRNA1(Val) + S-adenosyl-L-homocysteine + H(+). Its function is as follows. Specifically methylates the adenine in position 37 of tRNA(1)(Val) (anticodon cmo5UAC). This Aliivibrio salmonicida (strain LFI1238) (Vibrio salmonicida (strain LFI1238)) protein is tRNA1(Val) (adenine(37)-N6)-methyltransferase.